Reading from the N-terminus, the 1429-residue chain is uncharacterized protein (1429 aa).

2 disordered regions span residues 1–76 (MEGE…SGIE) and 103–130 (PAGA…AGEK). Residues 14-29 (SHSTSVVSERASSSGV) are compositionally biased toward low complexity. Polar residues predominate over residues 109-121 (SAQNANLISSKSE). 2 helical membrane-spanning segments follow: residues 197–217 (LTGQ…LSWI) and 225–245 (FFIL…CMIS). The SMP-LTD domain maps to 266–471 (DYETMSWFNT…WPNMFDYDLS (206 aa)). 2 C2 domains span residues 462-584 (WPNM…GDIY) and 738-858 (TPVD…DRSA). The tract at residues 899–932 (NTDNSSKQSSENVQSATDPTTPAKDNSTSNAETS) is disordered. The 118-residue stretch at 1060–1177 (TYMPVPMTLN…EPNVESQQSI (118 aa)) folds into the C2 3 domain. Residues 1280 to 1303 (EKNPSRSDLTTTQEASSSASVPPA) are disordered. A compositionally biased stretch (low complexity) spans 1294 to 1303 (ASSSASVPPA).

The protein resides in the membrane. This is an uncharacterized protein from Schizosaccharomyces pombe (strain 972 / ATCC 24843) (Fission yeast).